The chain runs to 69 residues: Toxin Tma2 (69 aa).

Residues 2 to 66 (KDDYPVDTAE…SPTKTSKRCN (65 aa)) enclose the LCN-type CS-alpha/beta domain. 4 cysteine pairs are disulfide-bonded: Cys-14–Cys-65, Cys-18–Cys-41, Cys-27–Cys-48, and Cys-31–Cys-50.

This sequence belongs to the long (4 C-C) scorpion toxin superfamily. Sodium channel inhibitor family. As to expression, expressed by the venom gland.

It localises to the secreted. Functionally, inhibits voltage-gated sodium channels (Nav). This toxin shows insect lethality against crickets. This is Toxin Tma2 from Tityus macrochirus (Scorpion).